We begin with the raw amino-acid sequence, 129 residues long: Small ribosomal subunit protein uS8 (129 aa).

Belongs to the universal ribosomal protein uS8 family. In terms of assembly, part of the 30S ribosomal subunit.

One of the primary rRNA binding proteins, it binds directly to 16S rRNA central domain where it helps coordinate assembly of the platform of the 30S subunit. This Archaeoglobus fulgidus (strain ATCC 49558 / DSM 4304 / JCM 9628 / NBRC 100126 / VC-16) protein is Small ribosomal subunit protein uS8.